The primary structure comprises 187 residues: Large ribosomal subunit protein eL18B (187 aa).

The residue at position 134 (Thr-134) is a Phosphothreonine. Ser-136 carries the phosphoserine modification.

It belongs to the eukaryotic ribosomal protein eL18 family. Component of the large ribosomal subunit (LSU). Mature yeast ribosomes consist of a small (40S) and a large (60S) subunit. The 40S small subunit contains 1 molecule of ribosomal RNA (18S rRNA) and at least 33 different proteins. The large 60S subunit contains 3 rRNA molecules (25S, 5.8S and 5S rRNA) and at least 46 different proteins. eL18 interacts with NAP1.

It is found in the cytoplasm. Functionally, component of the ribosome, a large ribonucleoprotein complex responsible for the synthesis of proteins in the cell. The small ribosomal subunit (SSU) binds messenger RNAs (mRNAs) and translates the encoded message by selecting cognate aminoacyl-transfer RNA (tRNA) molecules. The large subunit (LSU) contains the ribosomal catalytic site termed the peptidyl transferase center (PTC), which catalyzes the formation of peptide bonds, thereby polymerizing the amino acids delivered by tRNAs into a polypeptide chain. The nascent polypeptides leave the ribosome through a tunnel in the LSU and interact with protein factors that function in enzymatic processing, targeting, and the membrane insertion of nascent chains at the exit of the ribosomal tunnel. This Schizosaccharomyces pombe (strain 972 / ATCC 24843) (Fission yeast) protein is Large ribosomal subunit protein eL18B (rpl1802).